Here is a 1295-residue protein sequence, read N- to C-terminus: DNA-directed RNA polymerase subunit beta' (1295 aa).

Cys-60, Cys-62, Cys-75, and Cys-78 together coordinate Zn(2+). Positions 516, 518, and 520 each coordinate Mg(2+). Residues Cys-841, Cys-914, Cys-921, and Cys-924 each contribute to the Zn(2+) site.

This sequence belongs to the RNA polymerase beta' chain family. The RNAP catalytic core consists of 2 alpha, 1 beta, 1 beta' and 1 omega subunit. When a sigma factor is associated with the core the holoenzyme is formed, which can initiate transcription. Requires Mg(2+) as cofactor. The cofactor is Zn(2+).

It carries out the reaction RNA(n) + a ribonucleoside 5'-triphosphate = RNA(n+1) + diphosphate. Functionally, DNA-dependent RNA polymerase catalyzes the transcription of DNA into RNA using the four ribonucleoside triphosphates as substrates. The chain is DNA-directed RNA polymerase subunit beta' from Dehalococcoides mccartyi (strain ATCC BAA-2100 / JCM 16839 / KCTC 5957 / BAV1).